We begin with the raw amino-acid sequence, 1076 residues long: Nuclear factor of activated T-cells, cytoplasmic 3 (1076 aa).

Thr2 is subject to N-acetylthreonine. The interval 110-115 (PSIQIT) is calcineurin-binding. Positions 206 to 307 (LGSPLTSPGG…PGHSPRGSVT (102 aa)) are disordered. A run of 2 repeats spans residues 208–224 (SPLT…PGEE) and 237–253 (SPRQ…ITDE). Residues 208–309 (SPLTSPGGSP…HSPRGSVTED (102 aa)) form a 3 X SP repeats region. Polar residues predominate over residues 237–254 (SPRQSPCHSPRSSITDEN). Residues 257-271 (SPRPASGPSSRPTSP) are compositionally biased toward low complexity. The Nuclear localization signal motif lies at 274 to 276 (KRR). The stretch at 293–309 (SPVPSPGHSPRGSVTED) is repeat 3. Ser345 carries the post-translational modification Phosphoserine. The segment at 359–390 (CSDDQGSLSPSRETSVDDGLGSQYPLKKDSSG) is disordered. The segment covering 362–371 (DQGSLSPSRE) has biased composition (polar residues). Ser373 bears the Phosphoserine mark. The RHD domain maps to 416–597 (SSLPPLDWPL…IPVECSQRSA (182 aa)). Residues 445–452 (RAHYETEG) mediate DNA binding. The Nuclear localization signal signature appears at 687 to 689 (KRK). Disordered stretches follow at residues 700-744 (PVLM…ALSA) and 863-987 (GHLL…GGLS). The segment covering 713–722 (LSSVPSLPVP) has biased composition (low complexity). Composition is skewed to polar residues over residues 724–734 (SAQTQRPSSDT) and 888–911 (SAGQ…SHLQ). Low complexity-rich tracts occupy residues 917–939 (PSHP…SSPI) and 946–965 (QLQS…SPSP). Residues 970–981 (HSGQHSTQAQST) are compositionally biased toward polar residues. The Nuclear export signal motif lies at 1032–1041 (TLDDVNEIIG). The segment at 1049–1076 (VSQGPEVIRDAPLPGPESPDVMSSNSAQ) is disordered. Ser1066 carries the phosphoserine modification.

In terms of assembly, NFATC proteins bind to DNA as monomers. Member of the multicomponent NFATC transcription complex that consists of at least two components, a pre-existing cytoplasmic component NFATC2 and an inducible nuclear component NFATC1. Other members such as NFATC4, or members of the activating protein-1 family, MAF, GATA4 and Cbp/p300 can also bind the complex. Component of a promoter-binding complex composed of STAT3, NFATC3 and NFATC4; complex formation is enhanced by calcineurin. Interacts with TRIM17; this interaction prevents NFATC3 nuclear localization. Interacts with and ubiquitinated by STUB1/CHIP; HSPA1A/HSP70 is required as a co-chaperone. Post-translationally, phosphorylated by NFATC-kinase; dephosphorylated by calcineurin. Ubiquitinated by STUB1/CHIP, leading to proteasomal degradation. As to expression, expressed in cardiomyocytes (at protein level).

Its subcellular location is the cytoplasm. The protein localises to the nucleus. Its function is as follows. Acts as a regulator of transcriptional activation. Binds to the TNFSF11/RANKL promoter region and promotes TNFSF11 transcription. Binding to the TNFSF11 promoter region is increased by high levels of Ca(2+) which induce NFATC3 expression and may lead to regulation of TNFSF11 expression in osteoblasts. Plays a role in promoting mesenteric arterial wall remodeling in response to the intermittent hypoxia-induced increase in EDN1 and ROCK signaling. As a result NFATC3 colocalizes with F-actin filaments, translocates to the nucleus and promotes transcription of the smooth muscle hypertrophy and differentiation marker ACTA2. Promotes lipopolysaccharide-induced apoptosis and hypertrophy in cardiomyocytes. Following JAK/STAT signaling activation and as part of a complex with NFATC4 and STAT3, binds to the alpha-beta E4 promoter region of CRYAB and activates transcription in cardiomyocytes. In conjunction with NFATC4, involved in embryonic heart development via maintenance of cardiomyocyte survival, proliferation and differentiation. Plays a role in the inducible expression of cytokine genes in T-cells, especially in the induction of the IL-2. Required for thymocyte maturation during DN3 to DN4 transition and during positive selection. Positively regulates macrophage-derived polymicrobial clearance, via binding to the promoter region and promoting transcription of NOS2 resulting in subsequent generation of nitric oxide. Involved in Ca(2+)-mediated transcriptional responses upon Ca(2+) influx via ORAI1 CRAC channels. The polypeptide is Nuclear factor of activated T-cells, cytoplasmic 3 (Rattus norvegicus (Rat)).